We begin with the raw amino-acid sequence, 366 residues long: Ribosomal RNA large subunit methyltransferase M (366 aa).

S-adenosyl-L-methionine contacts are provided by residues serine 188, 221 to 224 (CPGG), aspartate 240, aspartate 260, and aspartate 277. Residue lysine 306 is the Proton acceptor of the active site.

The protein belongs to the class I-like SAM-binding methyltransferase superfamily. RNA methyltransferase RlmE family. RlmM subfamily. As to quaternary structure, monomer.

Its subcellular location is the cytoplasm. It carries out the reaction cytidine(2498) in 23S rRNA + S-adenosyl-L-methionine = 2'-O-methylcytidine(2498) in 23S rRNA + S-adenosyl-L-homocysteine + H(+). In terms of biological role, catalyzes the 2'-O-methylation at nucleotide C2498 in 23S rRNA. The protein is Ribosomal RNA large subunit methyltransferase M of Erwinia tasmaniensis (strain DSM 17950 / CFBP 7177 / CIP 109463 / NCPPB 4357 / Et1/99).